Reading from the N-terminus, the 1108-residue chain is Retinal guanylyl cyclase 2 (1108 aa).

The signal sequence occupies residues 1-50 (MFLGPWPFSRLLSWFAISSRLSGQHGLPSSKFLRCLCLLALLPLLRWGQA). Residues 51–469 (LPYKIGVIGP…CQGGIDPALA (419 aa)) lie on the Extracellular side of the membrane. Cysteines 104 and 132 form a disulfide. The helical transmembrane segment at 470–490 (MMVCFALLIALLSINGFAYFI) threads the bilayer. The Cytoplasmic portion of the chain corresponds to 491-1108 (RRRINKIQLI…AERQLVRNKP (618 aa)). In terms of domain architecture, Protein kinase spans 532–812 (FQIISEVQSG…DEIFNQFKTF (281 aa)). The Guanylate cyclase domain occupies 884-1014 (TLYFSDIVGF…DTVNTASRME (131 aa)).

This sequence belongs to the adenylyl cyclase class-4/guanylyl cyclase family. Homodimer. Interacts with RD3; promotes the exit of GUCY2F from the endoplasmic reticulum and its trafficking to the photoreceptor outer segments. Post-translationally, there are 9 conserved cysteine residues in sensory guanylate cyclases, 6 in the extracellular domain, which may be involved in intra- or interchain disulfide bonds. Retina.

It localises to the membrane. Its subcellular location is the photoreceptor outer segment membrane. It catalyses the reaction GTP = 3',5'-cyclic GMP + diphosphate. With respect to regulation, activated by GUCA1B when free calcium ions concentration is low, and inhibited by GUCA1B when free calcium ions concentration is high. Inhibited by RD3. Its function is as follows. Responsible for the synthesis of cyclic GMP (cGMP) in rods and cones of photoreceptors. Plays an essential role in phototransduction, by mediating cGMP replenishment. May also participate in the trafficking of membrane-asociated proteins to the photoreceptor outer segment membrane. This chain is Retinal guanylyl cyclase 2, found in Mus musculus (Mouse).